Consider the following 818-residue polypeptide: Mediator of RNA polymerase II transcription subunit 16 (818 aa).

WD repeat units follow at residues 86–125 (SSKS…INLW), 296–342 (LDGR…QSVH), and 615–666 (RLPE…PVYT). Residues 175–524 (TLSGFGGVAS…ANFLALKSNI (350 aa)) are interaction with Dif.

Belongs to the Mediator complex subunit 16 family. Component of the Mediator complex. Interacts with Dif.

Its subcellular location is the nucleus. Functionally, component of the Mediator complex, a coactivator involved in the regulated transcription of nearly all RNA polymerase II-dependent genes. Mediator functions as a bridge to convey information from gene-specific regulatory proteins to the basal RNA polymerase II transcription machinery. Mediator is recruited to promoters by direct interactions with regulatory proteins and serves as a scaffold for the assembly of a functional preinitiation complex with RNA polymerase II and the general transcription factors. Required for activated transcription of the MtnA, MtnB and MtnD genes. Required for transcriptional activation in response to lipopolysacchardie (LPS). This chain is Mediator of RNA polymerase II transcription subunit 16 (MED16), found in Drosophila melanogaster (Fruit fly).